We begin with the raw amino-acid sequence, 1036 residues long: Vacuolar basic amino acid transporter VSB1 (1036 aa).

Over 1 to 213 (MGRTIRRRRS…SKFAHYLPAA (213 aa)) the chain is Vacuolar. Phosphoserine occurs at positions 42 and 127. The residue at position 130 (Thr-130) is a Phosphothreonine. A phosphoserine mark is found at Ser-140, Ser-144, Ser-149, Ser-152, and Ser-153. Residues 214–234 (VLGLLLNILDALSYGMIIFPI) form a helical membrane-spanning segment. The Cytoplasmic portion of the chain corresponds to 235-236 (TE). A helical membrane pass occupies residues 237 to 257 (PVFSHLGPTGISMFYISTIIS). Topologically, residues 258 to 269 (QAVYSGGWSSFP) are vacuolar. A helical membrane pass occupies residues 270–290 (SGIGSEMIEITPFYHTMALAI). Residues 291 to 300 (KEALAGNDDE) lie on the Cytoplasmic side of the membrane. Residues 301–321 (IITTTIFCYVISSMLTGVVFY) traverse the membrane as a helical segment. Residues 322–338 (ALGKLRLGKIVGFFPRH) lie on the Vacuolar side of the membrane. The helical transmembrane segment at 339-359 (ILIGCIGGVGYFLIITGIEVT) threads the bilayer. The Cytoplasmic portion of the chain corresponds to 360-375 (TRVAKFEYSWPFFSGL). Residues 376–396 (FTDYDTLAKWLLPVLLTVVLI) form a helical membrane-spanning segment. The Vacuolar segment spans residues 397–405 (GTQRYFKNS). A helical membrane pass occupies residues 406-426 (LVLPSFYILTLVLFHFIVAII). Over 427–473 (PTLSLDALRQAGWIFPIANSDSKWYDHYRLFNVHKVHWSLVLQQIPT) the chain is Cytoplasmic. Residues 474-494 (MMALTFFGILHVPINVPALAM) form a helical membrane-spanning segment. The Vacuolar portion of the chain corresponds to 495 to 515 (SLQMDKYDVDRELIAHGYSNF). A helical transmembrane segment spans residues 516-536 (FSGLLGSVQNYLVYTNSVLFI). Topologically, residues 537–546 (RAGADSPFAG) are cytoplasmic. Residues 547–567 (FLLIALTICIMIIGPVIISFI) form a helical membrane-spanning segment. Residue Pro-568 is a topological domain, vacuolar. Residues 569–589 (ICIVGSLIFLLGYELLVEALV) form a helical membrane-spanning segment. Residues 590–604 (DTWNKLNRFEYLTVV) are Cytoplasmic-facing. The chain crosses the membrane as a helical span at residues 605 to 625 (IIVFTMGIFDFVLGIIVGILI). The Vacuolar portion of the chain corresponds to 626 to 664 (ACFSFLVDSTKLQTINGEYNGNVARSTVYRDYVQTKFLD). Positions 660 to 781 (TKFLDGIGEQ…ADLNSALEWC (122 aa)) constitute an STAS domain. The chain crosses the membrane as a helical span at residues 665–685 (GIGEQIYVLKLQNLLFFGTII). The Cytoplasmic segment spans residues 686-1036 (SIEEKIERLL…ELLGYTLVSA (351 aa)). Ser-842 is subject to Phosphoserine. The residue at position 847 (Thr-847) is a Phosphothreonine.

The protein resides in the vacuole membrane. Amino acid transporter involved in vacuolar uptake of basic amino acids for storage during nitrogen replete condititions. May function as an amino acid/proton antiporter. This chain is Vacuolar basic amino acid transporter VSB1, found in Saccharomyces cerevisiae (strain ATCC 204508 / S288c) (Baker's yeast).